A 490-amino-acid chain; its full sequence is N-succinylglutamate 5-semialdehyde dehydrogenase (490 aa).

Residue 223 to 228 (GSAGTG) participates in NAD(+) binding. Residues Glu246 and Cys280 contribute to the active site.

This sequence belongs to the aldehyde dehydrogenase family. AstD subfamily.

The enzyme catalyses N-succinyl-L-glutamate 5-semialdehyde + NAD(+) + H2O = N-succinyl-L-glutamate + NADH + 2 H(+). The protein operates within amino-acid degradation; L-arginine degradation via AST pathway; L-glutamate and succinate from L-arginine: step 4/5. Catalyzes the NAD-dependent reduction of succinylglutamate semialdehyde into succinylglutamate. The polypeptide is N-succinylglutamate 5-semialdehyde dehydrogenase (Serratia proteamaculans (strain 568)).